The chain runs to 97 residues: Small ribosomal subunit protein bS20 (97 aa).

It belongs to the bacterial ribosomal protein bS20 family.

Binds directly to 16S ribosomal RNA. This Prochlorococcus marinus (strain AS9601) protein is Small ribosomal subunit protein bS20.